We begin with the raw amino-acid sequence, 1172 residues long: Structural maintenance of chromosomes protein 2 (1172 aa).

32–39 (GLNGSGKS) serves as a coordination point for ATP. 2 coiled-coil regions span residues 172–204 (RMFE…EEIE) and 258–507 (SHIA…AYME). The region spanning 520–640 (SKVKGLVAQL…CDTPESAKKV (121 aa)) is the SMC hinge domain. Positions 676–941 (LLQIQKLNSL…INHLEKENDW (266 aa)) form a coiled coil.

It belongs to the SMC family. SMC2 subfamily. In terms of assembly, forms a heterodimer with cut3/smc4. Component of the condensin complex, which contains the cut3 and cut14 heterodimer, and three non smc subunits that probably regulate the complex: cnd1, cnd2 and cnd3.

The protein resides in the nucleus. It localises to the cytoplasm. Its subcellular location is the chromosome. Functionally, central component of the condensin complex, a complex required for conversion of interphase chromatin into mitotic-like condense chromosomes. The condensin complex probably introduces positive supercoils into relaxed DNA in the presence of type I topoisomerases and converts nicked DNA into positive knotted forms in the presence of type II topoisomerases. The chain is Structural maintenance of chromosomes protein 2 (cut14) from Schizosaccharomyces pombe (strain 972 / ATCC 24843) (Fission yeast).